A 72-amino-acid chain; its full sequence is Translation initiation factor IF-1 (72 aa).

The S1-like domain maps to 1–72 (MTKEENIEMQ…SKGRIIFRSR (72 aa)).

Belongs to the IF-1 family. As to quaternary structure, component of the 30S ribosomal translation pre-initiation complex which assembles on the 30S ribosome in the order IF-2 and IF-3, IF-1 and N-formylmethionyl-tRNA(fMet); mRNA recruitment can occur at any time during PIC assembly.

Its subcellular location is the cytoplasm. Its function is as follows. One of the essential components for the initiation of protein synthesis. Stabilizes the binding of IF-2 and IF-3 on the 30S subunit to which N-formylmethionyl-tRNA(fMet) subsequently binds. Helps modulate mRNA selection, yielding the 30S pre-initiation complex (PIC). Upon addition of the 50S ribosomal subunit IF-1, IF-2 and IF-3 are released leaving the mature 70S translation initiation complex. This chain is Translation initiation factor IF-1, found in Wigglesworthia glossinidia brevipalpis.